The sequence spans 184 residues: MIQLAQNAKHPSKKEQKPLVNEQIAFNQFTLIDENSTNLGIVKMENALKLAQEKQLDLVLIAPNPTKPIVKLLDFGRYTYDLKRKKRQAKKNQTIIQTKEVVVKPTIAKHDLEFRAKQSKNWIEKGHHVKFIVRAFGRVSTRIELIEKVFDDFYQLVKDVVEIQKPLTASSKTMYAALLVPLKR.

This sequence belongs to the IF-3 family. In terms of assembly, monomer.

It localises to the cytoplasm. Functionally, IF-3 binds to the 30S ribosomal subunit and shifts the equilibrium between 70S ribosomes and their 50S and 30S subunits in favor of the free subunits, thus enhancing the availability of 30S subunits on which protein synthesis initiation begins. The chain is Translation initiation factor IF-3 from Mycoplasma genitalium (strain ATCC 33530 / DSM 19775 / NCTC 10195 / G37) (Mycoplasmoides genitalium).